A 78-amino-acid chain; its full sequence is MTKSIISAFFIILILGMMVNEIEGQQQQQRCEEALTEIDCGAGNCNALCLQKRKGLGRCVQRTPCDKLKCMCYYPCSS.

An N-terminal signal peptide occupies residues 1–24 (MTKSIISAFFIILILGMMVNEIEG). 4 disulfide bridges follow: cysteine 31/cysteine 76, cysteine 40/cysteine 59, cysteine 45/cysteine 70, and cysteine 49/cysteine 72.

The protein belongs to the DEFL family.

The protein resides in the secreted. The chain is Defensin-like protein 141 (LCR3) from Arabidopsis thaliana (Mouse-ear cress).